The following is a 367-amino-acid chain: Pre-small/secreted glycoprotein (367 aa).

The signal sequence occupies residues 1-33; sequence MGSGYQLLQLPRERFRKTSFLVWVIILFQRAIS. A glycan (N-linked (GlcNAc...) asparagine; by host) is linked at N41. Intrachain disulfides connect C109-C136 and C122-C148. N-linked (GlcNAc...) asparagine; by host glycosylation is found at N205, N229, N239, N258, and N269.

It belongs to the filoviruses glycoprotein family. In terms of assembly, homodimer; disulfide-linked. The homodimers are linked by two disulfide bonds in a parallel orientation. Monomer. In terms of processing, this precursor is processed into mature sGP and delta-peptide by host furin or furin-like proteases. The cleavage site corresponds to the furin optimal cleavage sequence [KR]-X-[KR]-R. N-glycosylated. Post-translationally, O-glycosylated.

The protein localises to the secreted. Its function is as follows. Seems to possess an anti-inflammatory activity as it can reverse the barrier-decreasing effects of TNF alpha. Might therefore contribute to the lack of inflammatory reaction seen during infection in spite the of extensive necrosis and massive virus production. Does not seem to be involved in activation of primary macrophages. Does not seem to interact specifically with neutrophils. Functionally, viroporin that permeabilizes mammalian cell plasma membranes. It acts by altering permeation of ionic compounds and small molecules. This activity may lead to viral enterotoxic activity. The protein is Pre-small/secreted glycoprotein (GP) of Epomops franqueti (Franquet's epauletted fruit bat).